Here is a 434-residue protein sequence, read N- to C-terminus: Histidinol dehydrogenase (434 aa).

3 residues coordinate NAD(+): Tyr-130, Gln-191, and Asn-214. The substrate site is built by Ser-237, Gln-259, and His-262. Residues Gln-259 and His-262 each coordinate Zn(2+). Active-site proton acceptor residues include Glu-327 and His-328. Residues His-328, Asp-361, Glu-415, and His-420 each coordinate substrate. Asp-361 lines the Zn(2+) pocket. His-420 is a binding site for Zn(2+).

Belongs to the histidinol dehydrogenase family. It depends on Zn(2+) as a cofactor.

The enzyme catalyses L-histidinol + 2 NAD(+) + H2O = L-histidine + 2 NADH + 3 H(+). Its pathway is amino-acid biosynthesis; L-histidine biosynthesis; L-histidine from 5-phospho-alpha-D-ribose 1-diphosphate: step 9/9. In terms of biological role, catalyzes the sequential NAD-dependent oxidations of L-histidinol to L-histidinaldehyde and then to L-histidine. The sequence is that of Histidinol dehydrogenase from Rhizobium meliloti (strain 1021) (Ensifer meliloti).